The primary structure comprises 151 residues: Ubiquitin-conjugating enzyme E2-17 kDa (151 aa).

The UBC core domain occupies 4 to 150 (PARRRLMRDF…VKACVEQSFI (147 aa)). Cys-88 functions as the Glycyl thioester intermediate in the catalytic mechanism.

The protein belongs to the ubiquitin-conjugating enzyme family.

The protein localises to the nucleus. It carries out the reaction S-ubiquitinyl-[E1 ubiquitin-activating enzyme]-L-cysteine + [E2 ubiquitin-conjugating enzyme]-L-cysteine = [E1 ubiquitin-activating enzyme]-L-cysteine + S-ubiquitinyl-[E2 ubiquitin-conjugating enzyme]-L-cysteine.. It functions in the pathway protein modification; protein ubiquitination. Its function is as follows. E2 ubiquitin-conjugating enzyme that accepts ubiquitin from the ubiquitin-activating enzyme E1 and transfers it to a E3 ubiquitin-protein ligase. Required for postreplication repair of UV-damaged DNA. Involved in the negative regulation of the Ras/MAPK signaling pathway in the wing by acting with the putative E3 ligases poe, Kcmf1 and Ufd4 to mediate the ubiquitination and proteasomal degradation of rl/MAPK. Required for in mitophagy. This chain is Ubiquitin-conjugating enzyme E2-17 kDa, found in Drosophila melanogaster (Fruit fly).